The chain runs to 150 residues: 6,7-dimethyl-8-ribityllumazine synthase (150 aa).

Residues Phe11, Val43–Asp45, and Ala67–Ile69 each bind 5-amino-6-(D-ribitylamino)uracil. Ala72 to Thr73 contacts (2S)-2-hydroxy-3-oxobutyl phosphate. Catalysis depends on His75, which acts as the Proton donor. 5-amino-6-(D-ribitylamino)uracil is bound at residue Leu100. Arg115 contributes to the (2S)-2-hydroxy-3-oxobutyl phosphate binding site.

This sequence belongs to the DMRL synthase family.

The catalysed reaction is (2S)-2-hydroxy-3-oxobutyl phosphate + 5-amino-6-(D-ribitylamino)uracil = 6,7-dimethyl-8-(1-D-ribityl)lumazine + phosphate + 2 H2O + H(+). Its pathway is cofactor biosynthesis; riboflavin biosynthesis; riboflavin from 2-hydroxy-3-oxobutyl phosphate and 5-amino-6-(D-ribitylamino)uracil: step 1/2. Catalyzes the formation of 6,7-dimethyl-8-ribityllumazine by condensation of 5-amino-6-(D-ribitylamino)uracil with 3,4-dihydroxy-2-butanone 4-phosphate. This is the penultimate step in the biosynthesis of riboflavin. The sequence is that of 6,7-dimethyl-8-ribityllumazine synthase from Pyrobaculum aerophilum (strain ATCC 51768 / DSM 7523 / JCM 9630 / CIP 104966 / NBRC 100827 / IM2).